Reading from the N-terminus, the 271-residue chain is 2-dehydro-3-deoxyphosphooctonate aldolase (271 aa).

The protein belongs to the KdsA family.

It is found in the cytoplasm. The catalysed reaction is D-arabinose 5-phosphate + phosphoenolpyruvate + H2O = 3-deoxy-alpha-D-manno-2-octulosonate-8-phosphate + phosphate. Its pathway is carbohydrate biosynthesis; 3-deoxy-D-manno-octulosonate biosynthesis; 3-deoxy-D-manno-octulosonate from D-ribulose 5-phosphate: step 2/3. It functions in the pathway bacterial outer membrane biogenesis; lipopolysaccharide biosynthesis. This chain is 2-dehydro-3-deoxyphosphooctonate aldolase, found in Campylobacter jejuni subsp. jejuni serotype O:23/36 (strain 81-176).